Reading from the N-terminus, the 296-residue chain is Glycine--tRNA ligase alpha subunit (296 aa).

The protein belongs to the class-II aminoacyl-tRNA synthetase family. Tetramer of two alpha and two beta subunits.

It localises to the cytoplasm. It catalyses the reaction tRNA(Gly) + glycine + ATP = glycyl-tRNA(Gly) + AMP + diphosphate. This is Glycine--tRNA ligase alpha subunit from Listeria monocytogenes serotype 4a (strain HCC23).